Here is a 118-residue protein sequence, read N- to C-terminus: Lutropin subunit beta (118 aa).

Cystine bridges form between cysteine 9–cysteine 57, cysteine 23–cysteine 72, cysteine 26–cysteine 110, cysteine 34–cysteine 88, cysteine 38–cysteine 90, and cysteine 93–cysteine 100. A glycan (N-linked (GlcNAc...) asparagine) is linked at asparagine 13.

This sequence belongs to the glycoprotein hormones subunit beta family. In terms of assembly, heterodimer of a common alpha chain and a unique beta chain which confers biological specificity to thyrotropin, lutropin, follitropin and gonadotropin.

It localises to the secreted. Functionally, promotes spermatogenesis and ovulation by stimulating the testes and ovaries to synthesize steroids. The protein is Lutropin subunit beta (LHB) of Balaenoptera acutorostrata (Common minke whale).